The sequence spans 340 residues: MTTATANKVKAPKKGFKLDRQMIPTLAAVVIFILMIIMGQALFGTYIRLGFISSLFIDHAYLIILAVAMTLPILTGGIDLSVGAIVAITAVVGLKLANAGVPAFLVMIIMLLIGAVFGLLAGTLIEEFNMQPFIATLSTMFLARGLASIISTDSLTFPQGNDFSFISNVIKIIDNPKISNDLSFNVGVIIALVVVVFGYVFLHHTRTGRTIYAIGGSRSSAELMGLPVKRTQYIIYLTSATLAALASIVYTANIGSAKNTVGVGWELDAVASVVIGGTIITGGFGYVLGSVLGSLVRSILDPLTSDFGVPAEWTTIVIGLMILVFVVLQRAVMAVGGDKK.

Helical transmembrane passes span 23 to 43, 49 to 69, 73 to 93, 101 to 121, 130 to 150, 182 to 202, 234 to 254, 273 to 293, and 307 to 327; these read IPTL…QALF, LGFI…AVAM, ILTG…AVVG, VPAF…GLLA, MQPF…ASII, LSFN…YVFL, IIYL…TANI, VVIG…SVLG, and FGVP…VFVV.

The protein belongs to the binding-protein-dependent transport system permease family. As to quaternary structure, the complex is composed of an ATP-binding protein (FruK), two transmembrane proteins (FruF and FruG) and a solute-binding protein (FruE).

The protein localises to the cell membrane. Part of the high-affinity ABC transporter complex FruEKFG involved in fructose uptake. Can also transport ribose and xylose, with lower affinity. Probably responsible for the translocation of the substrate across the membrane. This chain is Fructose import permease protein FruG, found in Bifidobacterium longum (strain NCC 2705).